The primary structure comprises 228 residues: 2,3-bisphosphoglycerate-dependent phosphoglycerate mutase (228 aa).

Residues 8 to 15 (RHGQSQWN), 21 to 22 (TG), arginine 60, 87 to 90 (ERHY), lysine 98, 114 to 115 (RR), and 180 to 181 (GN) contribute to the substrate site. Histidine 9 acts as the Tele-phosphohistidine intermediate in catalysis. The Proton donor/acceptor role is filled by glutamate 87.

The protein belongs to the phosphoglycerate mutase family. BPG-dependent PGAM subfamily. As to quaternary structure, homodimer.

It carries out the reaction (2R)-2-phosphoglycerate = (2R)-3-phosphoglycerate. The protein operates within carbohydrate degradation; glycolysis; pyruvate from D-glyceraldehyde 3-phosphate: step 3/5. Catalyzes the interconversion of 2-phosphoglycerate and 3-phosphoglycerate. This is 2,3-bisphosphoglycerate-dependent phosphoglycerate mutase from Sphingopyxis alaskensis (strain DSM 13593 / LMG 18877 / RB2256) (Sphingomonas alaskensis).